Consider the following 393-residue polypeptide: Alpha-pyrone synthesis polyketide synthase-like Pks18 (393 aa).

Positions Met1–Pro26 are disordered. Cys175 acts as the Nucleophile in catalysis. Substrate is bound at residue His221.

It belongs to the thiolase-like superfamily. Chalcone/stilbene synthases family. In terms of assembly, homodimer.

Its pathway is lipid metabolism; fatty acid biosynthesis. Functionally, involved in the biosynthesis of tri- and tetraketide alpha-pyrones. Pks18 catalyzes the extension of medium- and long-chain aliphatic acyl-CoA substrates by using malonyl-CoA as an extender molecule to synthesize polyketide products. The protein is Alpha-pyrone synthesis polyketide synthase-like Pks18 (pks18) of Mycobacterium bovis (strain ATCC BAA-935 / AF2122/97).